The primary structure comprises 168 residues: Photosystem I assembly protein Ycf3 (168 aa).

TPR repeat units lie at residues 35–68, 72–105, and 120–153; these read AFTY…EIDP, SYIL…NSFL, and GEQA…TPGN.

It belongs to the Ycf3 family.

The protein resides in the plastid. It localises to the chloroplast thylakoid membrane. Essential for the assembly of the photosystem I (PSI) complex. May act as a chaperone-like factor to guide the assembly of the PSI subunits. This chain is Photosystem I assembly protein Ycf3, found in Jasminum nudiflorum (Winter jasmine).